Consider the following 245-residue polypeptide: 23S rRNA (guanosine-2'-O-)-methyltransferase RlmB (245 aa).

Residues Gly197, Ile217, and Leu226 each contribute to the S-adenosyl-L-methionine site.

It belongs to the class IV-like SAM-binding methyltransferase superfamily. RNA methyltransferase TrmH family. RlmB subfamily.

The protein localises to the cytoplasm. The catalysed reaction is guanosine(2251) in 23S rRNA + S-adenosyl-L-methionine = 2'-O-methylguanosine(2251) in 23S rRNA + S-adenosyl-L-homocysteine + H(+). Specifically methylates the ribose of guanosine 2251 in 23S rRNA. The polypeptide is 23S rRNA (guanosine-2'-O-)-methyltransferase RlmB (Bordetella parapertussis (strain 12822 / ATCC BAA-587 / NCTC 13253)).